A 277-amino-acid chain; its full sequence is Hematopoietically-expressed homeobox protein HHEX (277 aa).

Disordered regions lie at residues 47–69 (AAPAPHSLPAPPPPTLPSPNSSF) and 199–277 (WRRL…SATR). Residues 52–63 (HSLPAPPPPTLP) are compositionally biased toward pro residues. Residues 144 to 203 (RKGGQVRFSNEQTIELEKKFETQKYLSPPERKRLAKLLQLSERQVKTWFQNRRAKWRRLK) constitute a DNA-binding region (homeobox). A compositionally biased stretch (basic and acidic residues) spans 210 to 226 (TKKEEAEGTGDHGDPRS). Residues 250–266 (EDPESDVSDDSDQEVDI) are compositionally biased toward acidic residues.

In all hematopoietic tissues except peripheral blood erythrocytes and in the liver and lung.

The protein resides in the nucleus. Recognizes the DNA sequence 5'-ATTAA-3'. Transcriptional repressor. May play a role in hematopoietic differentiation. The polypeptide is Hematopoietically-expressed homeobox protein HHEX (HHEX) (Gallus gallus (Chicken)).